A 144-amino-acid chain; its full sequence is Transcriptional regulator MraZ (144 aa).

SpoVT-AbrB domains are found at residues 4-47 (EYKN…TADK) and 77-120 (AQEI…DLKQ).

Belongs to the MraZ family. In terms of assembly, forms oligomers.

The protein localises to the cytoplasm. Its subcellular location is the nucleoid. The sequence is that of Transcriptional regulator MraZ from Treponema denticola (strain ATCC 35405 / DSM 14222 / CIP 103919 / JCM 8153 / KCTC 15104).